We begin with the raw amino-acid sequence, 1131 residues long: PolyA-specific ribonuclease subunit panl-2 (1131 aa).

Residues 489-864 (VTMQSTHGMN…LPALLAYKKK (376 aa)) form the USP domain. The region spanning 909–1074 (VGLDAEFIKI…VDARYALKLY (166 aa)) is the Exonuclease domain. Residues 1104 to 1115 (QTSSPLVVSTTR) show a composition bias toward polar residues. Residues 1104–1131 (QTSSPLVVSTTRKTPEDTNPADAAPKSV) form a disordered region.

This is PolyA-specific ribonuclease subunit panl-2 from Caenorhabditis elegans.